Here is a 121-residue protein sequence, read N- to C-terminus: DNA-directed RNA polymerase subunit Rpo8 (121 aa).

Belongs to the archaeal Rpo8 RNA polymerase subunit family. Part of the 13-subunit RNA polymerase complex. This subunit is phosphorylated.

The protein localises to the cytoplasm. It catalyses the reaction RNA(n) + a ribonucleoside 5'-triphosphate = RNA(n+1) + diphosphate. Functionally, DNA-dependent RNA polymerase (RNAP) catalyzes the transcription of DNA into RNA using the four ribonucleoside triphosphates as substrates. The sequence is that of DNA-directed RNA polymerase subunit Rpo8 from Sulfolobus acidocaldarius (strain ATCC 33909 / DSM 639 / JCM 8929 / NBRC 15157 / NCIMB 11770).